The primary structure comprises 390 residues: Na(+)/H(+) antiporter NhaA 2 (390 aa).

The next 11 helical transmembrane spans lie at 23–43, 63–83, 100–120, 129–149, 158–178, 181–201, 208–228, 265–285, 293–313, 331–351, and 362–382; these read IVLI…LAAA, LHLW…GLEI, LPVL…LAIT, GWAI…ALVG, LFLL…IALF, SGLK…LVLV, ALLP…HSGI, GFVI…GADF, LGIA…SILV, LWGI…IAGL, and EAKL…LLVL.

It belongs to the NhaA Na(+)/H(+) (TC 2.A.33) antiporter family.

It localises to the cell inner membrane. It carries out the reaction Na(+)(in) + 2 H(+)(out) = Na(+)(out) + 2 H(+)(in). Its function is as follows. Na(+)/H(+) antiporter that extrudes sodium in exchange for external protons. This chain is Na(+)/H(+) antiporter NhaA 2, found in Novosphingobium aromaticivorans (strain ATCC 700278 / DSM 12444 / CCUG 56034 / CIP 105152 / NBRC 16084 / F199).